We begin with the raw amino-acid sequence, 197 residues long: Rac-like GTP-binding protein RHO1 (197 aa).

13 to 20 contacts GTP; the sequence is GDGAVGKT. The Effector region motif lies at 35 to 43; it reads YVPTVFDNF. Residues 60-64 and 118-121 contribute to the GTP site; these read DTAGQ and TKLD. Cysteine methyl ester is present on cysteine 194. Cysteine 194 carries the S-geranylgeranyl cysteine lipid modification. The propeptide at 195-197 is removed in mature form; the sequence is SIL.

The protein belongs to the small GTPase superfamily. Rho family. Expressed at the tip of pollen tubes.

Its subcellular location is the cytoplasm. It localises to the membrane. In terms of biological role, inactive GDP-bound Rho GTPases reside in the cytosol, are found in a complex with Rho GDP-dissociation inhibitors (Rho GDIs), and are released from the GDI protein in order to translocate to membranes upon activation. May be involved in cell polarity control during the actin-dependent tip growth of pollen tubes. The protein is Rac-like GTP-binding protein RHO1 (RHO1) of Pisum sativum (Garden pea).